Consider the following 1029-residue polypeptide: Serine/threonine-protein kinase KSP1 (1029 aa).

Residues 18–351 (YQKIEDISEG…TELQNLSEYT (334 aa)) form the Protein kinase domain. ATP is bound by residues 27-35 (GSYGYVSLA) and Lys47. Residues 56-79 (GQYDGPQDDENDCDSSDCDDDEDT) show a composition bias toward acidic residues. The disordered stretch occupies residues 56–105 (GQYDGPQDDENDCDSSDCDDDEDTKVDTDRHENENGNASSNNGSSREKKH). The span at 80–89 (KVDTDRHENE) shows a compositional bias: basic and acidic residues. Positions 90–99 (NGNASSNNGS) are enriched in low complexity. Catalysis depends on Asp207, which acts as the Proton acceptor. Residues 377 to 397 (VPPSSAPVSLPTPISSSNKQH) form a disordered region. Phosphoserine is present on residues Ser416 and Ser419. Phosphothreonine is present on residues Thr501, Thr504, and Thr526. Ser529 is modified (phosphoserine). Residues 532 to 570 (HRYMEGFSNNNNKQYRQNRNYNNNNNNSNNNHGSNYNNF) form a disordered region. Positions 538–570 (FSNNNNKQYRQNRNYNNNNNNSNNNHGSNYNNF) are enriched in low complexity. The residue at position 646 (Ser646) is a Phosphoserine. The tract at residues 732–824 (STNHNNNGNN…SDSKELEQER (93 aa)) is disordered. The segment covering 734–743 (NHNNNGNNNH) has biased composition (low complexity). Positions 744 to 754 (IDTNSTTNQYH) are enriched in polar residues. Positions 813–824 (HSSDSKELEQER) are enriched in basic and acidic residues. Phosphoserine occurs at positions 845 and 884. The interval 949–978 (EYEGESDKMAHGKMEGGDNESSSTSPDERQ) is disordered. Residues 953-964 (ESDKMAHGKMEG) show a composition bias toward basic and acidic residues. A Phosphothreonine modification is found at Thr1005. Ser1014 bears the Phosphoserine mark.

This sequence belongs to the protein kinase superfamily. Ser/Thr protein kinase family. CK2 subfamily. In terms of processing, phosphorylated by PKA in a TORC1-dependent manner. Phosphorylation at PKA consensus sites RRxS/T decreases upon rapamycin treatment.

It localises to the nucleus. It catalyses the reaction L-seryl-[protein] + ATP = O-phospho-L-seryl-[protein] + ADP + H(+). The enzyme catalyses L-threonyl-[protein] + ATP = O-phospho-L-threonyl-[protein] + ADP + H(+). May act on PRP20. The chain is Serine/threonine-protein kinase KSP1 (KSP1) from Saccharomyces cerevisiae (strain ATCC 204508 / S288c) (Baker's yeast).